Here is a 257-residue protein sequence, read N- to C-terminus: Aquaporin TIP4-2 (257 aa).

The next 2 helical transmembrane spans lie at 32-52 (LVLT…AGAG) and 63-83 (TLAA…TAGF). Residues 91–93 (NPA) carry the NPA 1 motif. Helical transmembrane passes span 107–127 (LRAL…CILL), 150–170 (GLVM…AMIL), and 178–198 (TIGP…GGNF). Positions 204 to 206 (NPA) match the NPA 2 motif. Residues 225–245 (WIGPLLGGSLAGFVYESLFMV) form a helical membrane-spanning segment.

Belongs to the MIP/aquaporin (TC 1.A.8) family. TIP (TC 1.A.8.10) subfamily.

It localises to the vacuole membrane. Its function is as follows. Aquaporins facilitate the transport of water and small neutral solutes across cell membranes. The chain is Aquaporin TIP4-2 (TIP4-2) from Zea mays (Maize).